The chain runs to 123 residues: Holo-[acyl-carrier-protein] synthase (123 aa).

The Mg(2+) site is built by aspartate 8 and glutamate 56.

Belongs to the P-Pant transferase superfamily. AcpS family. Requires Mg(2+) as cofactor.

It is found in the cytoplasm. It catalyses the reaction apo-[ACP] + CoA = holo-[ACP] + adenosine 3',5'-bisphosphate + H(+). Transfers the 4'-phosphopantetheine moiety from coenzyme A to a Ser of acyl-carrier-protein. The chain is Holo-[acyl-carrier-protein] synthase from Clostridium botulinum (strain Eklund 17B / Type B).